The primary structure comprises 165 residues: Pro-MCH (165 aa).

The first 21 residues, M1–G21, serve as a signal peptide directing secretion. A disordered region spans residues N68–K88. Position 143 is an isoleucine amide (I143). C153 and C162 are oxidised to a cystine.

It belongs to the melanin-concentrating hormone family. Post-translationally, pro-MCH is processed differentially in the brain and in peripheral organs producing two neuropeptides; NEI and MCH. A third peptide, NGE, may also be produced. Preferential processing in neurons by prohormone convertase 2 (PC2) generates NEI. MCH is generated in neurons of the lateral hypothalmic area by several prohormone convertases including PC1/3, PC2 and PC5/6.

Its subcellular location is the secreted. Its function is as follows. MCH may act as a neurotransmitter or neuromodulator in a broad array of neuronal functions directed toward the regulation of goal-directed behavior, such as food intake, and general arousal. This Canis lupus familiaris (Dog) protein is Pro-MCH (PMCH).